Consider the following 90-residue polypeptide: Protein RL8A (90 aa).

The helical transmembrane segment at 15–34 (WTCEGLLLLLGLLVLFFHHH) threads the bilayer. The segment at 55-90 (HESGWYSSDDDGDRDGDEETGESHNRNSVGLSAVFS) is disordered. A compositionally biased stretch (acidic residues) spans 62-74 (SDDDGDRDGDEET). Over residues 80-90 (RNSVGLSAVFS) the composition is skewed to polar residues.

The protein resides in the host membrane. This chain is Protein RL8A (RL8A), found in Homo sapiens (Human).